A 137-amino-acid chain; its full sequence is Ciliary microtubule inner protein 1 (137 aa).

Expressed in airway epithelial cells, renal tubular cells, pancreatic acinar cells and epithelial cells of the stomach, duodenum, and gallbladder (at protein level).

The protein localises to the cell projection. Its subcellular location is the cilium. This is Ciliary microtubule inner protein 1 from Homo sapiens (Human).